The sequence spans 769 residues: Serine protease HtrA-like (769 aa).

Over residues 1 to 20 (MDIGKKHVIPKSQYRRKRRE) the composition is skewed to basic residues. Residues 1 to 390 (MDIGKKHVIP…ATSKLNKGRA (390 aa)) form a disordered region. 2 stretches are compositionally biased toward basic and acidic residues: residues 21–64 (FFHN…ERFK) and 71–108 (LEQRNRDVNENKAEESKSNQDSKSAYNRDHYLTDDVSK). Residues 126–137 (YEQNSEATLSTK) show a composition bias toward polar residues. Residues 138–186 (STDKVESTEMRKLSSDKNKVGHEEQHVLSKPSEHDKETRIDSESSRTDS) are compositionally biased toward basic and acidic residues. A compositionally biased stretch (polar residues) spans 247–262 (QQSQNEQTKTYTYGDS). Basic and acidic residues-rich tracts occupy residues 264–296 (QNDKSNHENDLSHHIPSISDDKDNVMRENHIVD) and 310–330 (KTDDDRKLDEKIHVEDKHKQN). Positions 331–347 (ADSSETVGYQSQSTASH) are enriched in polar residues. Basic and acidic residues predominate over residues 348 to 364 (RSTEKRNISINDHDKLN). Over residues 365 to 390 (GQKTNTKTSANNNQKKATSKLNKGRA) the composition is skewed to polar residues. Residues 410 to 430 (LVILMGIIILIVILNAIFNNV) traverse the membrane as a helical segment. Active-site charge relay system residues include His-504, Asp-534, and Ser-619. Positions 680–733 (IASLNSFERQAVKLPGKVKNGVVVDQVDNNGLADQSGLKKGDVITELDGKLLED) constitute a PDZ domain.

It belongs to the peptidase S1C family.

Its subcellular location is the cell membrane. This chain is Serine protease HtrA-like, found in Staphylococcus aureus (strain COL).